A 313-amino-acid polypeptide reads, in one-letter code: Homoserine O-succinyltransferase (313 aa).

Catalysis depends on C142, which acts as the Acyl-thioester intermediate. Substrate is bound by residues K163 and S192. H235 (proton acceptor) is an active-site residue. E237 is a catalytic residue. R249 serves as a coordination point for substrate.

This sequence belongs to the MetA family.

It localises to the cytoplasm. The catalysed reaction is L-homoserine + succinyl-CoA = O-succinyl-L-homoserine + CoA. It participates in amino-acid biosynthesis; L-methionine biosynthesis via de novo pathway; O-succinyl-L-homoserine from L-homoserine: step 1/1. Transfers a succinyl group from succinyl-CoA to L-homoserine, forming succinyl-L-homoserine. The polypeptide is Homoserine O-succinyltransferase (Shewanella oneidensis (strain ATCC 700550 / JCM 31522 / CIP 106686 / LMG 19005 / NCIMB 14063 / MR-1)).